We begin with the raw amino-acid sequence, 434 residues long: 3-ketoacyl-CoA thiolase A, peroxisomal (434 aa).

Residues M1–C36 constitute a peroxisome transit peptide. The tract at residues M11–C36 is PTS2-type peroxisomal targeting signal. C133 (acyl-thioester intermediate) is an active-site residue. 2 positions are modified to N6-acetyllysine: K183 and K244. Active-site proton acceptor residues include H387 and C418.

The protein belongs to the thiolase-like superfamily. Thiolase family. Homodimer. Interacts (via PTS2-type peroxisomal targeting signal region) with PEX7; leading to its translocation into peroxisomes.

The protein resides in the peroxisome. It carries out the reaction an acyl-CoA + acetyl-CoA = a 3-oxoacyl-CoA + CoA. The enzyme catalyses 2 acetyl-CoA = acetoacetyl-CoA + CoA. It catalyses the reaction tetradecanoyl-CoA + acetyl-CoA = 3-oxohexadecanoyl-CoA + CoA. The catalysed reaction is hexanoyl-CoA + acetyl-CoA = 3-oxooctanoyl-CoA + CoA. It carries out the reaction 3-oxohexadecanedioyl-CoA + CoA = tetradecanedioyl-CoA + acetyl-CoA. The enzyme catalyses 3-oxo-(6Z,9Z,12Z,15Z,18Z,21Z)-tetracosahexaenoyl-CoA + CoA = (4Z,7Z,10Z,13Z,16Z,19Z)-docosahexaenoyl-CoA + acetyl-CoA. It participates in lipid metabolism; peroxisomal fatty acid beta-oxidation. Its function is as follows. Responsible for the thiolytic cleavage of straight chain 3-keto fatty acyl-CoAs (3-oxoacyl-CoAs). Plays an important role in fatty acid peroxisomal beta-oxidation. Catalyzes the cleavage of short, medium, long, and very long straight chain 3-oxoacyl-CoAs. Medium chain straight 3-oxoacyl-CoAs are preferred substrates. This Rattus norvegicus (Rat) protein is 3-ketoacyl-CoA thiolase A, peroxisomal.